Consider the following 184-residue polypeptide: Putative NAD(P)H nitroreductase HI_1542 (184 aa).

Residues R10–S12, R35, and H39 each bind FMN. Residue A122–G127 coordinates NAD(+). Residue W132–S134 participates in FMN binding.

Belongs to the nitroreductase family. In terms of assembly, homodimer. Requires FMN as cofactor.

In Haemophilus influenzae (strain ATCC 51907 / DSM 11121 / KW20 / Rd), this protein is Putative NAD(P)H nitroreductase HI_1542.